A 450-amino-acid chain; its full sequence is Bifunctional protein GlmU (450 aa).

The segment at 1–228 (MSTALVILAA…EAQTLGVNSR (228 aa)) is pyrophosphorylase. UDP-N-acetyl-alpha-D-glucosamine is bound by residues 8–11 (LAAG), K22, Q75, 80–81 (GT), 103–105 (YGD), G140, E154, N169, and N226. D105 lines the Mg(2+) pocket. Position 226 (N226) interacts with Mg(2+). The segment at 229 to 249 (ADLAAADAIFQTRARAELLDL) is linker. An N-acetyltransferase region spans residues 250-450 (GVTLMAPETV…AKKASKQKET (201 aa)). UDP-N-acetyl-alpha-D-glucosamine is bound by residues R315 and K333. Catalysis depends on H345, which acts as the Proton acceptor. Y348 and N359 together coordinate UDP-N-acetyl-alpha-D-glucosamine. Acetyl-CoA-binding positions include A362, 368–369 (NY), S387, T405, and R422.

The protein in the N-terminal section; belongs to the N-acetylglucosamine-1-phosphate uridyltransferase family. In the C-terminal section; belongs to the transferase hexapeptide repeat family. In terms of assembly, homotrimer. Requires Mg(2+) as cofactor.

The protein localises to the cytoplasm. The catalysed reaction is alpha-D-glucosamine 1-phosphate + acetyl-CoA = N-acetyl-alpha-D-glucosamine 1-phosphate + CoA + H(+). It carries out the reaction N-acetyl-alpha-D-glucosamine 1-phosphate + UTP + H(+) = UDP-N-acetyl-alpha-D-glucosamine + diphosphate. The protein operates within nucleotide-sugar biosynthesis; UDP-N-acetyl-alpha-D-glucosamine biosynthesis; N-acetyl-alpha-D-glucosamine 1-phosphate from alpha-D-glucosamine 6-phosphate (route II): step 2/2. Its pathway is nucleotide-sugar biosynthesis; UDP-N-acetyl-alpha-D-glucosamine biosynthesis; UDP-N-acetyl-alpha-D-glucosamine from N-acetyl-alpha-D-glucosamine 1-phosphate: step 1/1. It participates in bacterial outer membrane biogenesis; LPS lipid A biosynthesis. Its function is as follows. Catalyzes the last two sequential reactions in the de novo biosynthetic pathway for UDP-N-acetylglucosamine (UDP-GlcNAc). The C-terminal domain catalyzes the transfer of acetyl group from acetyl coenzyme A to glucosamine-1-phosphate (GlcN-1-P) to produce N-acetylglucosamine-1-phosphate (GlcNAc-1-P), which is converted into UDP-GlcNAc by the transfer of uridine 5-monophosphate (from uridine 5-triphosphate), a reaction catalyzed by the N-terminal domain. The protein is Bifunctional protein GlmU of Ruegeria pomeroyi (strain ATCC 700808 / DSM 15171 / DSS-3) (Silicibacter pomeroyi).